We begin with the raw amino-acid sequence, 381 residues long: CCN family member 1 (381 aa).

The N-terminal stretch at 1–24 (MSSRIARALALVVTLLHLTRLALS) is a signal peptide. The IGFBP N-terminal domain maps to 25-94 (TCPAACHCPL…TALKGICRAQ (70 aa)). 6 disulfides stabilise this stretch: Cys26/Cys50, Cys30/Cys52, Cys32/Cys53, Cys39/Cys56, Cys64/Cys78, and Cys70/Cys91. Positions 98-164 (RPCEYNSRIY…GQCCEEWVCD (67 aa)) constitute a VWFC domain. Position 188 is a phosphoserine; by FAM20C (Ser188). In terms of domain architecture, TSP type-1 spans 228-273 (KCIVQTTSWSQCSKTCGTGISTRVTNDNPECRLVKETRICEVRPCG). A heparin-binding region spans residues 279 to 315 (SLKKGKKCSKTKKSPEPVRFTYAGCLSVKKYRPKYCG). Intrachain disulfides connect Cys286/Cys323, Cys303/Cys337, Cys314/Cys353, Cys317/Cys355, and Cys322/Cys359. In terms of domain architecture, CTCK spans 286–360 (CSKTKKSPEP…QSCKCNYNCP (75 aa)).

It belongs to the CCN family. Interaction with integrins is heparin- and cell-type-dependent and promotes cell adhesion. In skin fibroblasts it binds ITGA6/ITGB1, in endothelial cells, binds ITGAV/ITGB3 and in platelets, ITGA2B/ITGB3. Binds, in vitro, ITGAV/ITGB5.

The protein localises to the secreted. In terms of biological role, promotes cell proliferation, chemotaxis, angiogenesis and cell adhesion. Appears to play a role in wound healing by up-regulating, in skin fibroblasts, the expression of a number of genes involved in angiogenesis, inflammation and matrix remodeling including VEGA-A, VEGA-C, MMP1, MMP3, TIMP1, uPA, PAI-1 and integrins alpha-3 and alpha-5. CCN1-mediated gene regulation is dependent on heparin-binding. Down-regulates the expression of alpha-1 and alpha-2 subunits of collagen type-1. Promotes cell adhesion and adhesive signaling through integrin alpha-6/beta-1, cell migration through integrin alpha-v/beta-5 and cell proliferation through integrin alpha-v/beta-3. This chain is CCN family member 1, found in Homo sapiens (Human).